A 358-amino-acid chain; its full sequence is Homer protein homolog 3 (358 aa).

Residues 1 to 80 (MSTAREQPIF…TKTSQKFGQW (80 aa)) are required for interaction with NFATC2. The region spanning 1–113 (MSTAREQPIF…EKFQEVKEAA (113 aa)) is the WH1 domain. The stretch at 95 to 122 (SEQQLTQFAEKFQEVKEAARLAREKSQD) forms a coiled coil. Phosphoserine is present on residues Ser120 and Ser158. Disordered regions lie at residues 137 to 168 (QVPPSPLVSTNGPEEKLFRSQSADAPGPTERE) and 239 to 296 (AEPV…QVQD). Residues 190–355 (ALQDSNQRLA…LREGLARLAE (166 aa)) are a coiled coil. A compositionally biased stretch (basic and acidic residues) spans 257-267 (LEARVQTKDQE). The span at 268-277 (IQTLKNQSTG) shows a compositional bias: polar residues. Positions 280-290 (EAPDTAEREET) are enriched in basic and acidic residues.

This sequence belongs to the Homer family. As to quaternary structure, tetramer. Encodes coiled-coil structures that mediate homo- and heteromultimerization. Interacts with NFATC2; interaction is calcium independent; interaction competes with PPP3CA for NFATC2 binding; interaction is reduced by AKT activation. Interacts with NFATC1 and NFATC4. Interacts with SHANK1; forms a high-order complex at least composed of SHANK1 and HOMER3; the complex formation is regulated by CAMK2A-mediated phosphorylation.

The protein resides in the cytoplasm. Its subcellular location is the postsynaptic density. It localises to the synapse. Postsynaptic density scaffolding protein. Binds and cross-links cytoplasmic regions of GRM1, GRM5, ITPR1, DNM3, RYR1, RYR2, SHANK1 and SHANK3. By physically linking GRM1 and GRM5 with ER-associated ITPR1 receptors, it aids the coupling of surface receptors to intracellular calcium release. Negatively regulates T cell activation by inhibiting the calcineurin-NFAT pathway. Acts by competing with calcineurin/PPP3CA for NFAT protein binding, hence preventing NFAT activation by PPP3CA. The chain is Homer protein homolog 3 from Rattus norvegicus (Rat).